The sequence spans 264 residues: Acyl-[acyl-carrier-protein]--UDP-N-acetylglucosamine O-acyltransferase (264 aa).

This sequence belongs to the transferase hexapeptide repeat family. LpxA subfamily. Homotrimer.

The protein localises to the cytoplasm. It carries out the reaction a (3R)-hydroxyacyl-[ACP] + UDP-N-acetyl-alpha-D-glucosamine = a UDP-3-O-[(3R)-3-hydroxyacyl]-N-acetyl-alpha-D-glucosamine + holo-[ACP]. It functions in the pathway glycolipid biosynthesis; lipid IV(A) biosynthesis; lipid IV(A) from (3R)-3-hydroxytetradecanoyl-[acyl-carrier-protein] and UDP-N-acetyl-alpha-D-glucosamine: step 1/6. Involved in the biosynthesis of lipid A, a phosphorylated glycolipid that anchors the lipopolysaccharide to the outer membrane of the cell. The protein is Acyl-[acyl-carrier-protein]--UDP-N-acetylglucosamine O-acyltransferase of Rickettsia rickettsii.